Here is a 67-residue protein sequence, read N- to C-terminus: Large ribosomal subunit protein eL38 (67 aa).

The protein belongs to the eukaryotic ribosomal protein eL38 family.

The chain is Large ribosomal subunit protein eL38 (rpl38e) from Aeropyrum pernix (strain ATCC 700893 / DSM 11879 / JCM 9820 / NBRC 100138 / K1).